A 154-amino-acid chain; its full sequence is 6,7-dimethyl-8-ribityllumazine synthase (154 aa).

Residues F21, 55–57 (AFE), and 79–81 (CVI) each bind 5-amino-6-(D-ribitylamino)uracil. Position 84–85 (84–85 (AT)) interacts with (2S)-2-hydroxy-3-oxobutyl phosphate. The active-site Proton donor is H87. Position 112 (F112) interacts with 5-amino-6-(D-ribitylamino)uracil. A (2S)-2-hydroxy-3-oxobutyl phosphate-binding site is contributed by R126.

Belongs to the DMRL synthase family. In terms of assembly, forms an icosahedral capsid composed of 60 subunits, arranged as a dodecamer of pentamers.

The catalysed reaction is (2S)-2-hydroxy-3-oxobutyl phosphate + 5-amino-6-(D-ribitylamino)uracil = 6,7-dimethyl-8-(1-D-ribityl)lumazine + phosphate + 2 H2O + H(+). Its pathway is cofactor biosynthesis; riboflavin biosynthesis; riboflavin from 2-hydroxy-3-oxobutyl phosphate and 5-amino-6-(D-ribitylamino)uracil: step 1/2. Its function is as follows. Catalyzes the formation of 6,7-dimethyl-8-ribityllumazine by condensation of 5-amino-6-(D-ribitylamino)uracil with 3,4-dihydroxy-2-butanone 4-phosphate. This is the penultimate step in the biosynthesis of riboflavin. The polypeptide is 6,7-dimethyl-8-ribityllumazine synthase (Staphylococcus aureus (strain Newman)).